Reading from the N-terminus, the 270-residue chain is Basigin (270 aa).

A signal peptide spans 1-21; the sequence is MAAVLFALLALALLRAGGASA. The 82-residue stretch at 22 to 103 folds into the Ig-like C2-type domain; the sequence is AAGTVTTSVQ…TGEATLTVDG (82 aa). Topologically, residues 22–207 are extracellular; that stretch reads AAGTVTTSVQ…VTLRVRSRLA (186 aa). Intrachain disulfides connect cysteine 41/cysteine 87 and cysteine 126/cysteine 185. 4 N-linked (GlcNAc...) asparagine glycosylation sites follow: asparagine 44, asparagine 75, asparagine 152, and asparagine 186. The Ig-like V-type domain maps to 105–203; it reads PRIKAVKKSE…DAAVVTLRVR (99 aa). The chain crosses the membrane as a helical span at residues 208 to 228; the sequence is ALWPFLGIVAEVLVLVTVIFI. Residues 229–270 lie on the Cytoplasmic side of the membrane; the sequence is YEKRRKPDEVLDDEDAGAAPLKSSGHHVNDDKGKNVRQRNAS. A disordered region spans residues 239–270; the sequence is LDDEDAGAAPLKSSGHHVNDDKGKNVRQRNAS. Serine 252 carries the post-translational modification Phosphoserine.

Homooligomer. Interacts with VEGFA, KDR/VEGFR2, PPIA/CYPA, SLC1A3, SLC16A12, SLC16A11, ATP1B2, MAG, L1CAM and AJAP1. Interacts with PPIL2; regulates BSG transport to the cell membrane. Interacts with XKR8; promoting its localization at the cell membrane. Interacts with SLC16A3; interaction mediates SLC16A3 targeting to the plasma membrane. Interacts with SLC16A1; interaction mediates SLC16A1 targeting to the plasma membrane. Interacts with SLC16A6; this interaction mediates targeting to the plasma membrane.

The protein localises to the cell membrane. It is found in the endoplasmic reticulum membrane. The protein resides in the basolateral cell membrane. Its function is as follows. Signaling receptor for cyclophilins, essential for PPIA/CYPA and PPIB/CYPB-dependent signaling related to chemotaxis and adhesion of immune cells. Plays an important role in targeting the monocarboxylate transporters SLC16A1/GLUT1, SLC16A3, SLC16A8, SLC16A11 and SLC16A12 to the plasma membrane. Acts as a coreceptor for vascular endothelial growth factor receptor 2 (KDR/VEGFR2) in endothelial cells enhancing its VEGFA-mediated activation and downstream signaling. Promotes angiogenesis through EPAS1/HIF2A-mediated up-regulation of VEGFA and KDR/VEGFR2 in endothelial cells. This is Basigin (BSG) from Oryctolagus cuniculus (Rabbit).